The chain runs to 85 residues: Conotoxin Mi15a (85 aa).

The first 23 residues, 1–23 (MEKLTVLILVATVLLTIQVLGQS), serve as a signal peptide directing secretion. A propeptide spanning residues 24–49 (DRDKHLKRRPKQYATKRLSARMRGHR) is cleaved from the precursor. Residue Q50 is modified to Pyrrolidone carboxylic acid.

It belongs to the conotoxin O2 superfamily. Contains 4 disulfide bonds. As to expression, expressed by the venom duct.

The protein localises to the secreted. The protein is Conotoxin Mi15a of Conus miles (Soldier cone).